The following is a 304-amino-acid chain: Thymidylate synthase (304 aa).

DUMP is bound by residues arginine 30 and 157 to 158; that span reads RR. The active-site Nucleophile is cysteine 177. DUMP-binding positions include 206–209, asparagine 217, and 247–249; these read RSCD and HVY. Residue aspartate 209 participates in (6R)-5,10-methylene-5,6,7,8-tetrahydrofolate binding.

The protein belongs to the thymidylate synthase family. In terms of assembly, homodimer.

Its subcellular location is the nucleus. It catalyses the reaction dUMP + (6R)-5,10-methylene-5,6,7,8-tetrahydrofolate = 7,8-dihydrofolate + dTMP. It functions in the pathway pyrimidine metabolism; dTTP biosynthesis. Inhibited by 5-fluoro-2'-deoxyuridine 5'-monophosphate (FdUMP). In terms of biological role, thymidylate synthase required for de novo biosynthesis of pyrimidine deoxyribonucleotides. Required for both nuclear and mitochondrial DNA synthesis. This is Thymidylate synthase (CDC21) from Saccharomyces cerevisiae (strain ATCC 204508 / S288c) (Baker's yeast).